The primary structure comprises 347 residues: Globoside alpha-1,3-N-acetylgalactosaminyltransferase 1 (347 aa).

Residues 1 to 5 (MRCRR) are Cytoplasmic-facing. The helical; Signal-anchor for type II membrane protein transmembrane segment at 6–26 (LALGLGFSLLSGIALWSLWIY) threads the bilayer. Residues 27–347 (METWLPFSYV…LDKATSWLRS (321 aa)) are Lumenal-facing. N-linked (GlcNAc...) asparagine glycosylation occurs at N108. Substrate contacts are provided by residues 116 to 121 (FAVGKY), 206 to 208 (DVD), and 228 to 231 (HPGY). Residues D206 and D208 each coordinate Mn(2+). E298 functions as the Nucleophile in the catalytic mechanism.

The protein belongs to the glycosyltransferase 6 family. It depends on Mn(2+) as a cofactor.

The protein resides in the golgi apparatus membrane. It catalyses the reaction a globoside Gb4Cer (d18:1(4E)) + UDP-N-acetyl-alpha-D-galactosamine = a globoside Forssman (d18:1(4E)) + UDP + H(+). It carries out the reaction a globoside Gb4Cer + UDP-N-acetyl-alpha-D-galactosamine = a globoside IV3GalNAc-Gb4Cer + UDP + H(+). It functions in the pathway protein modification; protein glycosylation. In terms of biological role, catalyzes the formation of Forssman glycolipid via the addition of N-acetylgalactosamine (GalNAc) in alpha-1,3-linkage to GalNAcb-1,3Gala-1,4Galb-1,4GlcCer (Gb4Cer). Forssman glycolipid (also called Forssman antigen; FG) probably serves for adherence of some pathogens such as E.coli uropathogenic strains. The sequence is that of Globoside alpha-1,3-N-acetylgalactosaminyltransferase 1 from Canis lupus familiaris (Dog).